The chain runs to 512 residues: Probable cytochrome P450 6d2 (512 aa).

Cysteine 457 is a binding site for heme.

Belongs to the cytochrome P450 family. It depends on heme as a cofactor.

It is found in the endoplasmic reticulum membrane. Its subcellular location is the microsome membrane. In terms of biological role, may be involved in the metabolism of insect hormones and in the breakdown of synthetic insecticides. The polypeptide is Probable cytochrome P450 6d2 (Cyp6d2) (Drosophila melanogaster (Fruit fly)).